The chain runs to 438 residues: MSAYAEHIKTVCSRFDKALEDNNFESVLVYSGQPRVDFLDDNAPPYRVNPLFKYWVPVTESPKSAIFYRKGSQRPTVYLFQARDFWHAPVNVPEEEWQQHVDLKIIDDLSMLTEDLGSDLEQSAFIGEDFAQPVSDWRVKARNPQALIDHLHFHRSIKTQWEVDNLREANRLAAKAHVAAKEAFFAGKSELEIHHAYLGAIDFRESQVPYNSIVALNSHSAILHYDVYDTVPPKQIRSFLIDAGARYRGYCSDITRSYAYEEGFYANLVEAMDKAQQELLSEIKPGVSYYDLHVSMHLKVAQILSDFEFIKGDAQSIYDKGYTSAFMPHGLGHFIGLQVHDVGGFLKDDKGNSYERSERHPFLRLLRDIEVGHVFTIEPGLYVVDQLLEEHKDSADINWEKVDELRPYGGVRIEDSIVVGADGNENLTRDAFKELGAE.

Mn(2+)-binding residues include Asp-242, Asp-253, His-333, Glu-378, and Glu-414.

It belongs to the peptidase M24B family. Bacterial-type prolidase subfamily. It depends on Mn(2+) as a cofactor.

The catalysed reaction is Xaa-L-Pro dipeptide + H2O = an L-alpha-amino acid + L-proline. Functionally, splits dipeptides with a prolyl residue in the C-terminal position. This is Xaa-Pro dipeptidase 2 from Idiomarina loihiensis (strain ATCC BAA-735 / DSM 15497 / L2-TR).